The following is a 159-amino-acid chain: Disease resistance response protein Pi176 (159 aa).

Belongs to the BetVI family.

The protein is Disease resistance response protein Pi176 of Pisum sativum (Garden pea).